Reading from the N-terminus, the 95-residue chain is DNA-directed RNA polymerase subunit Rpo6 (95 aa).

It belongs to the archaeal Rpo6/eukaryotic RPB6 RNA polymerase subunit family. As to quaternary structure, part of the 13-subunit RNA polymerase complex.

It is found in the cytoplasm. The enzyme catalyses RNA(n) + a ribonucleoside 5'-triphosphate = RNA(n+1) + diphosphate. Its function is as follows. DNA-dependent RNA polymerase (RNAP) catalyzes the transcription of DNA into RNA using the four ribonucleoside triphosphates as substrates. This is DNA-directed RNA polymerase subunit Rpo6 from Saccharolobus solfataricus (strain ATCC 35092 / DSM 1617 / JCM 11322 / P2) (Sulfolobus solfataricus).